A 675-amino-acid chain; its full sequence is DNA ligase (675 aa).

Residues 41–45 (DAEYD), 90–91 (SL), and Glu120 each bind NAD(+). Catalysis depends on Lys122, which acts as the N6-AMP-lysine intermediate. NAD(+)-binding residues include Arg143, Glu178, Lys295, and Lys319. The Zn(2+) site is built by Cys413, Cys416, Cys431, and Cys436. Positions 596–675 (GVPQTFAGKT…ADFLQLIDRV (80 aa)) constitute a BRCT domain.

Belongs to the NAD-dependent DNA ligase family. LigA subfamily. The cofactor is Mg(2+). Mn(2+) is required as a cofactor.

The enzyme catalyses NAD(+) + (deoxyribonucleotide)n-3'-hydroxyl + 5'-phospho-(deoxyribonucleotide)m = (deoxyribonucleotide)n+m + AMP + beta-nicotinamide D-nucleotide.. Functionally, DNA ligase that catalyzes the formation of phosphodiester linkages between 5'-phosphoryl and 3'-hydroxyl groups in double-stranded DNA using NAD as a coenzyme and as the energy source for the reaction. It is essential for DNA replication and repair of damaged DNA. This Heliobacterium modesticaldum (strain ATCC 51547 / Ice1) protein is DNA ligase.